The primary structure comprises 79 residues: Translational regulator CsrA (79 aa).

Belongs to the CsrA/RsmA family. As to quaternary structure, homodimer; the beta-strands of each monomer intercalate to form a hydrophobic core, while the alpha-helices form wings that extend away from the core.

Its subcellular location is the cytoplasm. In terms of biological role, a translational regulator that binds mRNA to regulate translation initiation and/or mRNA stability. Usually binds in the 5'-UTR at or near the Shine-Dalgarno sequence preventing ribosome-binding, thus repressing translation. Its main target seems to be the major flagellin gene, while its function is anatagonized by FliW. The chain is Translational regulator CsrA from Geotalea uraniireducens (strain Rf4) (Geobacter uraniireducens).